The sequence spans 182 residues: ATP synthase subunit delta (182 aa).

It belongs to the ATPase delta chain family. As to quaternary structure, F-type ATPases have 2 components, F(1) - the catalytic core - and F(0) - the membrane proton channel. F(1) has five subunits: alpha(3), beta(3), gamma(1), delta(1), epsilon(1). F(0) has three main subunits: a(1), b(2) and c(10-14). The alpha and beta chains form an alternating ring which encloses part of the gamma chain. F(1) is attached to F(0) by a central stalk formed by the gamma and epsilon chains, while a peripheral stalk is formed by the delta and b chains.

It localises to the cell inner membrane. F(1)F(0) ATP synthase produces ATP from ADP in the presence of a proton or sodium gradient. F-type ATPases consist of two structural domains, F(1) containing the extramembraneous catalytic core and F(0) containing the membrane proton channel, linked together by a central stalk and a peripheral stalk. During catalysis, ATP synthesis in the catalytic domain of F(1) is coupled via a rotary mechanism of the central stalk subunits to proton translocation. In terms of biological role, this protein is part of the stalk that links CF(0) to CF(1). It either transmits conformational changes from CF(0) to CF(1) or is implicated in proton conduction. In Histophilus somni (strain 2336) (Haemophilus somnus), this protein is ATP synthase subunit delta.